Here is a 661-residue protein sequence, read N- to C-terminus: MELKKDSNAVAIDMLLIVHSEKRRAAQATHLDPQANPGALLQNRGGFQGVRNGIRKWQELEENSFQGNLPEKQCLQQPQVITSYDNQGTQLTVEIHPQDAMPQLLKKFSLAKRLQGDKNGNMRPRQPGGKDAHAYPWDRSSLKSMPLDLRLFEKLDASASQVTVKSGLNELVSDLLQEAHSDLERVRAIWIWICHHIEYDVEAAQEKDRQAFKPTDILRTQKTNCDGYAGLFERMCRVAGVQCVTVPGYSKGFGYQTGQSFSGEFDHAWNAVYLEGRWHLVDSTWGSGLVDTTTSKFTFLYNEFYFLTHPALFIEDHFPDNKNWQLLKPPQSLRQFENSMYHKSEFYNKGMLSAHPETSMIRTVNGKATITIESRAPTLFMFMLNGKQEHGLLSLRKNGMKLEVYPPTMGTHKLQIFAKGNSEIYSSVLEYTLKCNYVDFSVQLPSELHQPVGPSWFSEQMGITKPSHSDPIIHTSDGRCAISFSVEEGVSVLASLHGDDGPITEETQRRYIFQLNRGKRTELKVQLPHAGKFALKIFVKKRQEQGNFIFVFNYLLCCANTKVNWPMFPESFGNWGQDNELLEPLSGVLPANRNVAFKLKLHGIAKALVKGQDTWPLTLNPEGYWEGSCNTAGCQEVYVMVLENANHNFYSYILKYKVNDQ.

The segment at 116–137 (GDKNGNMRPRQPGGKDAHAYPW) is disordered. Residues cysteine 225, histidine 267, and aspartate 282 contribute to the active site.

The protein belongs to the transglutaminase-like superfamily. In terms of assembly, interacts with IGFN1 and FLNC. As to expression, specifically expressed in skeletal and cardiac muscle.

It is found in the cytoplasm. The protein localises to the cytoskeleton. Its subcellular location is the myofibril. The protein resides in the sarcomere. It localises to the z line. Probable cytoskeleton-associated protease required for normal muscle growth. Involved in function, maturation and stabilization of the neuromuscular junction. May act by cleaving muscle-specific proteins such as FLNC. In Mus musculus (Mouse), this protein is Kyphoscoliosis peptidase.